Here is a 90-residue protein sequence, read N- to C-terminus: [Phe8]-phyllolitorin (90 aa).

The signal sequence occupies residues 1 to 30 (MSAVPFTRVLLISGFLAHLLLSTFVTLTVC). Positions 31–48 (KEVTEESDDLSKRNVLQR) are excised as a propeptide. Q49 is subject to Pyrrolidone carboxylic acid. Methionine amide is present on M57. Positions 61-90 (SLENTNRRSDEDMEISALFRGSPLKVKRSD) are excised as a propeptide.

The protein belongs to the bombesin/neuromedin-B/ranatensin family. Expressed by the skin glands.

Its subcellular location is the secreted. In Phyllomedusa sauvagei (Sauvage's leaf frog), this protein is [Phe8]-phyllolitorin.